Here is a 467-residue protein sequence, read N- to C-terminus: Uronate isomerase (467 aa).

It belongs to the metallo-dependent hydrolases superfamily. Uronate isomerase family.

It catalyses the reaction D-glucuronate = D-fructuronate. The enzyme catalyses aldehydo-D-galacturonate = keto-D-tagaturonate. It functions in the pathway carbohydrate metabolism; pentose and glucuronate interconversion. The chain is Uronate isomerase from Streptococcus uberis (strain ATCC BAA-854 / 0140J).